Reading from the N-terminus, the 252-residue chain is Ubiquinone biosynthesis O-methyltransferase (252 aa).

S-adenosyl-L-methionine contacts are provided by Arg45, Gly76, Asp97, and Met141.

This sequence belongs to the methyltransferase superfamily. UbiG/COQ3 family.

The catalysed reaction is a 3-demethylubiquinol + S-adenosyl-L-methionine = a ubiquinol + S-adenosyl-L-homocysteine + H(+). It catalyses the reaction a 3-(all-trans-polyprenyl)benzene-1,2-diol + S-adenosyl-L-methionine = a 2-methoxy-6-(all-trans-polyprenyl)phenol + S-adenosyl-L-homocysteine + H(+). The protein operates within cofactor biosynthesis; ubiquinone biosynthesis. O-methyltransferase that catalyzes the 2 O-methylation steps in the ubiquinone biosynthetic pathway. This Caulobacter vibrioides (strain ATCC 19089 / CIP 103742 / CB 15) (Caulobacter crescentus) protein is Ubiquinone biosynthesis O-methyltransferase.